Here is a 551-residue protein sequence, read N- to C-terminus: MDLSRSAAWSALVSHRQEVEQLHMRDMFMSDHDRFKHFSIRWNGLLLDYSKNRINSRTMGLLVELARQANLIEARDGMFAGEKINFTENRAVLHTALRRQPGYTLNVDGLDVPAEVDSVLRQMKAFTDKVVGGEWKGYTGKRITDVVNIGIGGSDLGPCMVTEALRPFADGAIAVHFVSNIDGTHVSEVLKRVDAETTLFVIASKTFTTQETLTNSMTAREWFLSRAIDPAHIALHFAAVSTNRTKVVEFGIDPENMFRFWDWVGGRYSLWSAIGLSIALYLGFEAFQELLRGARAMDEHFQEAPLEENIPVILALLGVWYNNFFDVPSHAVIPYDQYLHRLPAYLQQLDMESNGKRVDRLGNTVEYPTGPIIWGEPGTNSQHAFFQLLHQGTGFIPADFILPLKTQNPIGEHHDILVANCFAQTEALMRGKSASEASEELAAAGVDEETMQMLVAHKVFPGNRPTNTLLLDEINPFTLGSLIAMYEHKVFVQGVIWQVNSFDQWGVELGKQLAKAILPELQSQKESDAHDASTNALINSYRSYREGQKVG.

Glutamate 352 serves as the catalytic Proton donor. Catalysis depends on residues histidine 383 and lysine 511.

This sequence belongs to the GPI family.

The protein resides in the cytoplasm. The catalysed reaction is alpha-D-glucose 6-phosphate = beta-D-fructose 6-phosphate. Its pathway is carbohydrate biosynthesis; gluconeogenesis. The protein operates within carbohydrate degradation; glycolysis; D-glyceraldehyde 3-phosphate and glycerone phosphate from D-glucose: step 2/4. Functionally, catalyzes the reversible isomerization of glucose-6-phosphate to fructose-6-phosphate. The protein is Glucose-6-phosphate isomerase of Chlorobium luteolum (strain DSM 273 / BCRC 81028 / 2530) (Pelodictyon luteolum).